A 1070-amino-acid chain; its full sequence is Protocadherin-8 (1070 aa).

A signal peptide spans 1 to 29; it reads MSPAKRWGSPCLFPLQLFSLCWVLSVAQS. Cadherin domains are found at residues 30-135, 136-245, 247-354, 393-497, 498-609, and 615-721; these read KTVR…APRF, PRAQ…SPAF, QGAV…APEI, QEAG…APIF, TKPV…SPIL, and ANGS…VPAS. Over 30-747 the chain is Extracellular; it reads KTVRYSTFEE…SGPSLQWDTP (718 aa). Asn616 is a glycosylation site (N-linked (GlcNAc...) asparagine). Residues 716 to 725 are compositionally biased toward low complexity; the sequence is SAVPASSGSP. Residues 716-740 form a disordered region; sequence SAVPASSGSPEHSRPPGSRLAPSGP. Residues 748-768 traverse the membrane as a helical segment; it reads LIVIIVLAGSCTLLLAAIIAI. Over 769 to 1070 the chain is Cytoplasmic; that stretch reads ATTCNRRKKE…SPKKGINENV (302 aa). 3 disordered regions span residues 777-859, 906-928, and 1046-1070; these read KEVR…TGES, REAE…DSDS, and IGVP…NENV. 2 stretches are compositionally biased toward basic and acidic residues: residues 780-790 and 906-921; these read RKGGALREERP and REAE…KGDS. Position 1053 is a phosphoserine (Ser1053).

In terms of assembly, the N-terminal extracellular domain forms homophilic interactions; these interactions activate p38 MAPK via TAOK2 and trigger endocytosis. Interacts with CDH2; this interaction may lead to CDH2 cointernalization. Interacts with CDH11. Interacts with TAOK2.

The protein localises to the cell membrane. The protein resides in the cell projection. Its subcellular location is the dendrite. It is found in the presynaptic cell membrane. It localises to the postsynaptic cell membrane. Calcium-dependent cell-adhesion protein. May play a role in activity-induced synaptic reorganization underlying long term memory. Could be involved in CDH2 internalization through TAOK2/p38 MAPK pathway. In hippocampal neurons, may play a role in the down-regulation of dendritic spines, maybe through its action on CDH2 endocytosis. The polypeptide is Protocadherin-8 (Pcdh8) (Mus musculus (Mouse)).